We begin with the raw amino-acid sequence, 207 residues long: Large ribosomal subunit protein uL4 (207 aa).

Residues 47–78 (GTHKVKNRSEVRGGGRKPWRQKGTGRARQGSI) are disordered. A compositionally biased stretch (basic residues) spans 60–71 (GGRKPWRQKGTG).

Belongs to the universal ribosomal protein uL4 family. Part of the 50S ribosomal subunit.

Its function is as follows. One of the primary rRNA binding proteins, this protein initially binds near the 5'-end of the 23S rRNA. It is important during the early stages of 50S assembly. It makes multiple contacts with different domains of the 23S rRNA in the assembled 50S subunit and ribosome. In terms of biological role, forms part of the polypeptide exit tunnel. In Listeria innocua serovar 6a (strain ATCC BAA-680 / CLIP 11262), this protein is Large ribosomal subunit protein uL4.